A 426-amino-acid polypeptide reads, in one-letter code: UPF0164 protein TP_0548 (426 aa).

An N-terminal signal peptide occupies residues 1-37; it reads MISCSVRRRPRWEPQVGAAFLAFALLPVLASGRGMQA.

The protein belongs to the UPF0164 family.

The chain is UPF0164 protein TP_0548 from Treponema pallidum (strain Nichols).